The sequence spans 78 residues: Probable [Fe-S]-dependent transcriptional repressor (78 aa).

Cysteine 56, cysteine 61, cysteine 64, and cysteine 70 together coordinate iron-sulfur cluster.

Belongs to the FeoC family.

Its function is as follows. May function as a transcriptional regulator that controls feoABC expression. The polypeptide is Probable [Fe-S]-dependent transcriptional repressor (Enterobacter sp. (strain 638)).